The sequence spans 114 residues: Iron-sulfur cluster insertion protein ErpA (114 aa).

Iron-sulfur cluster-binding residues include Cys-42, Cys-106, and Cys-108.

Belongs to the HesB/IscA family. As to quaternary structure, homodimer. Iron-sulfur cluster serves as cofactor.

Its function is as follows. Required for insertion of 4Fe-4S clusters for at least IspG. This Buchnera aphidicola subsp. Acyrthosiphon pisum (strain 5A) protein is Iron-sulfur cluster insertion protein ErpA.